Reading from the N-terminus, the 268-residue chain is Gasdermin bGSDM (268 aa).

A lipid anchor (S-palmitoyl cysteine) is attached at cysteine 3. 4 consecutive transmembrane segments (beta stranded) span residues 78–94 (IDLRKTNSLSSAVAAKI), 103–121 (APSFDLAFENSSSVIFHIE), 168–185 (KMRMQFERKNKGELGVDV), and 195–211 (AKLESKIEGSTYDRLVF). Residues 248 to 268 (GENMALNLFTEIQDAGFIEVT) form a C-terminal region region.

Belongs to the bacterial gasdermin family. As to quaternary structure, monomer in solution. Forms large, homooligomeric ring-shaped pores when inserted in membranes. Cleavage by the adjacently encoded protease (G563DRAFT_02009) between Leu-247 and Gly-248 relieves autoinhibition, releasing the N-terminus which initiates loss of cell integrity. Post-translationally, palmitoylation helps stabilize the inactive state; may self-palmitoylate. Palmitoylation is not required for permeabilization of liposomes by the ring-like pores in vitro. Palmitoylation plays a significant role in pore formation.

It is found in the cytoplasm. The protein resides in the cell inner membrane. Its activity is regulated as follows. The full-length protein before cleavage is inactive: intramolecular interactions between the N-terminal domain and the C-terminal region, as well as the lipid modification, mediate autoinhibition. The pyroptosis-like-inducing activity is carried by the released N-terminal domain (gasdermin bGSDM, N-terminus). Precursor of a pore-forming protein involved in defense against bacteriophages. Cleavage of this precursor by its dedicated, neighboring protease (G563DRAFT_02009) releases the active moiety (gasdermin bGSDM, N-terminus) which inserts into membranes, forming pores and triggering cell death. Expression of bGSDM and its protease is highly toxic in E.coli. Cells expressing the gene pair stop dividing and lose membrane integrity. Both proteins are required to kill E.coli. In terms of biological role, pore-forming protein that causes membrane permeabilization via a pyroptosis-like activity. Makes ring-like pores with walls about 50 Angstroms thick and an interior pore diameter of 200-300 Angstroms, when integrated in liposomes. This chain is Gasdermin bGSDM, found in Runella zeae (strain ATCC BAA-293 / DSM 19591 / LMG 21438 / NS12).